Consider the following 60-residue polypeptide: Small ribosomal subunit protein bS21 (60 aa).

A disordered region spans residues lysine 38–tyrosine 60.

The protein belongs to the bacterial ribosomal protein bS21 family.

The protein is Small ribosomal subunit protein bS21 of Mycoplasmoides gallisepticum (strain R(low / passage 15 / clone 2)) (Mycoplasma gallisepticum).